A 748-amino-acid polypeptide reads, in one-letter code: Bifunctional lysine-specific demethylase and histidyl-hydroxylase NO66 (748 aa).

2 disordered regions span residues 65–135 (NIDR…RSTY) and 160–264 (TEVV…DDEG). Residues 94 to 110 (LENKKPKVEVKKEDEKS) show a composition bias toward basic and acidic residues. Residues 124–134 (LVQNETSTRST) are compositionally biased toward polar residues. The segment covering 163 to 193 (VESDDEQMIGLDSDEELEDEDETDIDEDEMM) has biased composition (acidic residues). The span at 194 to 203 (IDPKDIERYI) shows a compositional bias: basic and acidic residues. The segment covering 207 to 264 (SVEDEEDMEDEEIEDEEFEDEEFEDEEEEADEQEEEEEDVSDEESVVSEMDADSDDEG) has biased composition (acidic residues). The region spanning 399–543 (QLVNPQTYDD…NLMEKVVPEA (145 aa)) is the JmjC domain. Fe cation contacts are provided by histidine 442, aspartate 444, and histidine 509.

The protein belongs to the ROX family. NO66 subfamily. It depends on Fe(2+) as a cofactor.

The protein resides in the nucleus. The enzyme catalyses N(6),N(6)-dimethyl-L-lysyl(36)-[histone H3] + 2 2-oxoglutarate + 2 O2 = L-lysyl(36)-[histone H3] + 2 formaldehyde + 2 succinate + 2 CO2. Functionally, oxygenase that can act as both a histone lysine demethylase and a ribosomal histidine hydroxylase. Specifically demethylates 'Lys-4' (H3K4me) and 'Lys-36' (H3K36me) of histone H3, thereby playing a central role in histone code. Mediates response to multiple stress stimuli, including heat shock and osmotic, oxidative, and ethanol stress. The sequence is that of Bifunctional lysine-specific demethylase and histidyl-hydroxylase NO66 (jmjc-1) from Caenorhabditis elegans.